We begin with the raw amino-acid sequence, 166 residues long: Endoribonuclease YbeY (166 aa).

Positions 131, 135, and 141 each coordinate Zn(2+).

This sequence belongs to the endoribonuclease YbeY family. Zn(2+) is required as a cofactor.

The protein localises to the cytoplasm. In terms of biological role, single strand-specific metallo-endoribonuclease involved in late-stage 70S ribosome quality control and in maturation of the 3' terminus of the 16S rRNA. This is Endoribonuclease YbeY from Dehalococcoides mccartyi (strain CBDB1).